The following is a 262-amino-acid chain: Autophagy-related protein 27 (262 aa).

Positions 1 to 20 (MLKMRLLLTWVLLVLPLVNA) are cleaved as a signal peptide. In terms of domain architecture, MRH spans 21 to 170 (LKCANNRVLR…IIKGPSGCKK (150 aa)). Over 21–185 (LKCANNRVLR…EDGDVEESSG (165 aa)) the chain is Lumenal. Disulfide bonds link Cys-23/Cys-61, Cys-73/Cys-80, and Cys-139/Cys-168. The chain crosses the membrane as a helical span at residues 186–206 (LSWFTWLFIYAIFFTVVYLVV). The Cytoplasmic portion of the chain corresponds to 207–262 (TSYTQTRGGSIDDFRHDFVERAKQFFTSLPAFVREVVSKVLGSAPNAAERGGYSAV).

The protein belongs to the ATG27 family.

The protein resides in the cytoplasmic vesicle membrane. Its subcellular location is the golgi apparatus membrane. It localises to the mitochondrion membrane. Regulates the cytoplasm to vacuole transport (Cvt) vesicle formation. The polypeptide is Autophagy-related protein 27 (ATG27) (Vanderwaltozyma polyspora (strain ATCC 22028 / DSM 70294 / BCRC 21397 / CBS 2163 / NBRC 10782 / NRRL Y-8283 / UCD 57-17) (Kluyveromyces polysporus)).